We begin with the raw amino-acid sequence, 199 residues long: NAD(P)H dehydrogenase (quinone) (199 aa).

Residues 4-190 (VLVLYYSSYG…AMARFQGGHV (187 aa)) form the Flavodoxin-like domain. FMN contacts are provided by residues 10 to 15 (SSYGHI) and 78 to 80 (TRF). NAD(+) is bound at residue Y12. W98 lines the substrate pocket. Residues 113–119 (STATQHG) and H134 contribute to the FMN site.

The protein belongs to the WrbA family. The cofactor is FMN.

It carries out the reaction a quinone + NADH + H(+) = a quinol + NAD(+). The catalysed reaction is a quinone + NADPH + H(+) = a quinol + NADP(+). The polypeptide is NAD(P)H dehydrogenase (quinone) (Azoarcus sp. (strain BH72)).